The chain runs to 208 residues: Ribosome maturation factor RimM (208 aa).

Positions 98–205 constitute a PRC barrel domain; that stretch reads ADEFYVPDLI…IIEITPPDGL (108 aa). The interval 154-174 is disordered; it reads LPSKSKRSRDTKNQKKNQSPP.

This sequence belongs to the RimM family. Binds ribosomal protein uS19.

The protein resides in the cytoplasm. In terms of biological role, an accessory protein needed during the final step in the assembly of 30S ribosomal subunit, possibly for assembly of the head region. Essential for efficient processing of 16S rRNA. May be needed both before and after RbfA during the maturation of 16S rRNA. It has affinity for free ribosomal 30S subunits but not for 70S ribosomes. This chain is Ribosome maturation factor RimM, found in Trichodesmium erythraeum (strain IMS101).